Reading from the N-terminus, the 82-residue chain is Small ribosomal subunit protein bS18 (82 aa).

The disordered stretch occupies residues 1-20 (MVDINQIPTRRPFHRRHKTC).

It belongs to the bacterial ribosomal protein bS18 family. As to quaternary structure, part of the 30S ribosomal subunit. Forms a tight heterodimer with protein bS6.

Its function is as follows. Binds as a heterodimer with protein bS6 to the central domain of the 16S rRNA, where it helps stabilize the platform of the 30S subunit. This is Small ribosomal subunit protein bS18 from Brucella suis (strain ATCC 23445 / NCTC 10510).